The chain runs to 387 residues: Patatin-01 (387 aa).

Residues 1–23 form the signal peptide; the sequence is MATTKSFLILSVMILATTSSTFA. The 199-residue stretch at 32–230 folds into the PNPLA domain; that stretch reads LSIDGGGIKG…TVADPALLSV (199 aa). Positions 36 to 41 match the GXGXXG motif; sequence GGGIKG. Residues 75 to 79 carry the GXSXG motif; it reads GTSTG. S77 functions as the Nucleophile in the catalytic mechanism. Residue N115 is glycosylated (N-linked (GlcNAc...) asparagine). The Proton acceptor role is filled by D216. A DGA/G motif is present at residues 216 to 218; the sequence is DGA. Residues 361-385 adopt a coiled-coil conformation; sequence ETYEEALKRFAKLLSDRKKLRANKA.

This sequence belongs to the patatin family. In terms of tissue distribution, tuber.

The protein localises to the vacuole. Functionally, probable lipolytic acyl hydrolase (LAH), an activity which is thought to be involved in the response of tubers to pathogens. The chain is Patatin-01 from Solanum tuberosum (Potato).